Reading from the N-terminus, the 214-residue chain is Ribonuclease P protein component 3 (214 aa).

This sequence belongs to the eukaryotic/archaeal RNase P protein component 3 family. In terms of assembly, consists of a catalytic RNA component and at least 4-5 protein subunits.

It localises to the cytoplasm. It catalyses the reaction Endonucleolytic cleavage of RNA, removing 5'-extranucleotides from tRNA precursor.. In terms of biological role, part of ribonuclease P, a protein complex that generates mature tRNA molecules by cleaving their 5'-ends. This is Ribonuclease P protein component 3 from Thermococcus gammatolerans (strain DSM 15229 / JCM 11827 / EJ3).